The primary structure comprises 303 residues: GTPase Era (303 aa).

The region spanning 9 to 176 (KSGFVSIIGR…VEQIVEHMEE (168 aa)) is the Era-type G domain. The G1 stretch occupies residues 17 to 24 (GRPNVGKS). 17-24 (GRPNVGKS) contacts GTP. The G2 stretch occupies residues 43–47 (QTTRN). The segment at 64–67 (DTPG) is G3. Residues 64–68 (DTPGI) and 126–129 (NKID) contribute to the GTP site. The segment at 126–129 (NKID) is G4. Residues 155 to 157 (ISA) form a G5 region. In terms of domain architecture, KH type-2 spans 199 to 284 (IREKVLHLTK…YLELWVKVQK (86 aa)).

It belongs to the TRAFAC class TrmE-Era-EngA-EngB-Septin-like GTPase superfamily. Era GTPase family. In terms of assembly, monomer.

The protein resides in the cytoplasm. The protein localises to the cell membrane. In terms of biological role, an essential GTPase that binds both GDP and GTP, with rapid nucleotide exchange. Plays a role in 16S rRNA processing and 30S ribosomal subunit biogenesis and possibly also in cell cycle regulation and energy metabolism. This Shouchella clausii (strain KSM-K16) (Alkalihalobacillus clausii) protein is GTPase Era.